The sequence spans 205 residues: Holliday junction branch migration complex subunit RuvA (205 aa).

The domain I stretch occupies residues 1–64 (MIGKLKGILE…EEAIRLFGFV (64 aa)). Positions 65–143 (AKAEQEWFCL…PFNDNALHFT (79 aa)) are domain II. The segment at 144 to 149 (PQPHLE) is flexible linker. Residues 150–205 (VTHQPTNDALSALVKLGFERDQAARALALAMNALEGETVSSALLIRHSLKLLSPST) form a domain III region.

It belongs to the RuvA family. Homotetramer. Forms an RuvA(8)-RuvB(12)-Holliday junction (HJ) complex. HJ DNA is sandwiched between 2 RuvA tetramers; dsDNA enters through RuvA and exits via RuvB. An RuvB hexamer assembles on each DNA strand where it exits the tetramer. Each RuvB hexamer is contacted by two RuvA subunits (via domain III) on 2 adjacent RuvB subunits; this complex drives branch migration. In the full resolvosome a probable DNA-RuvA(4)-RuvB(12)-RuvC(2) complex forms which resolves the HJ.

It localises to the cytoplasm. The RuvA-RuvB-RuvC complex processes Holliday junction (HJ) DNA during genetic recombination and DNA repair, while the RuvA-RuvB complex plays an important role in the rescue of blocked DNA replication forks via replication fork reversal (RFR). RuvA specifically binds to HJ cruciform DNA, conferring on it an open structure. The RuvB hexamer acts as an ATP-dependent pump, pulling dsDNA into and through the RuvAB complex. HJ branch migration allows RuvC to scan DNA until it finds its consensus sequence, where it cleaves and resolves the cruciform DNA. This chain is Holliday junction branch migration complex subunit RuvA, found in Bartonella quintana (strain Toulouse) (Rochalimaea quintana).